Consider the following 219-residue polypeptide: MSTTDNTNGDDRRPGQPEWDDEENNFEHLDATEVPAEEEALVESAGLDADTLADLEDAFDGVDASTEDPGATVGETSTLESELAERTEDLQRLSAEYANYRRRTDRERKVGVEAAKAKVLGELLPILDDLELAQKHGDLDEGPLKAFRDKLVSVVEGLGVSAFGAEGDVFDAERHEAVQDLSSGDDKVLGTVLRRGYQMNDRLLRTAMVIIADPAEDAQ.

2 disordered regions span residues 1–32 (MSTT…LDAT) and 59–87 (FDGV…AERT).

This sequence belongs to the GrpE family. As to quaternary structure, homodimer.

Its subcellular location is the cytoplasm. Functionally, participates actively in the response to hyperosmotic and heat shock by preventing the aggregation of stress-denatured proteins, in association with DnaK and GrpE. It is the nucleotide exchange factor for DnaK and may function as a thermosensor. Unfolded proteins bind initially to DnaJ; upon interaction with the DnaJ-bound protein, DnaK hydrolyzes its bound ATP, resulting in the formation of a stable complex. GrpE releases ADP from DnaK; ATP binding to DnaK triggers the release of the substrate protein, thus completing the reaction cycle. Several rounds of ATP-dependent interactions between DnaJ, DnaK and GrpE are required for fully efficient folding. The sequence is that of Protein GrpE from Corynebacterium diphtheriae (strain ATCC 700971 / NCTC 13129 / Biotype gravis).